Here is a 293-residue protein sequence, read N- to C-terminus: MSSSITPSLIAADLFSVDGLVAVVTGGATGIGLMIVKALEENGAKVYIIGRRKEVLDKVAKEEAKHGNIIPLQGDASSKPDLERIVAHITKETGYINLLVANAGISGPDPVRITPSTTLSELQRDLWSLDPSIFAQTFSVNVGTAYFSIAAFLPLLDAGNHKGNVVQSSQAIITSSIGAFGRVPLAHYAYSASKAAVTHMTKQFATALTKYKIRFNILAPGLYPSEMTAGIVKSFEQLSPEERATRVSPLGREGNTEDMAGCILWLASKAGAWLSGNVVVSDGGKLSVTPSSY.

Positions 31 and 102 each coordinate NADP(+). Serine 175 acts as the Proton donor in catalysis. 3 residues coordinate NADP(+): tyrosine 190, lysine 194, and serine 225. Tyrosine 190 acts as the Proton acceptor in catalysis. Lysine 194 (lowers pKa of active site Tyr) is an active-site residue.

This sequence belongs to the short-chain dehydrogenases/reductases (SDR) family.

Short-chain dehydrogenase/reductase; part of the gene cluster that mediates the biosynthesis of the phomopsins, a group of hexapeptide mycotoxins which infects lupins and causes lupinosis disease in livestock. The role of phomF within the phomopsins biosynthesis pathway has still to be determined. The pathway starts with the processing of the precursor phomA by several endopeptidases including kexin proteases as well as the cluster-specific S41 family peptidase phomP1 and the oligopeptidase phomG to produce 10 identical copies of the hexapeptide Tyr-Val-Ile-Pro-Ile-Asp. After being excised from the precursor peptide, the core peptides are cyclized and modified post-translationally by enzymes encoded within the gene cluster. The timing and order of proteolysis of the phomA precursor and PTMs are still unknown. Two tyrosinase-like enzymes, phomQ1 and phomQ2, catalyze the chlorination and hydroxylation of Tyr, respectively. PhomYb, is proposed to be involved in the construction of the macrocyclic structure. The other 4 ustYa family proteins may be involved in PTMs that generate the unique structure of phomopsin A. PhomYa is required for the hydroxylation of C-beta of Tyr. PhomYc, phomYd, and phomYe are responsible for the biosynthesis of 2,3-dehydroisoleucine (dIle), 2,3-dehydroaspartic acid (dAsp), and 3,4-dehydroproline (dPro), respectively. While dIle formation by phomYc is indispensable for the installation of dAsp by phomYd, the order of the other PTMs have not been elucidated yet. Most of the biosynthetic enzymes likely have broad substrate specificity, and thus, there might be a metabolic grid from a precursor to phomopsin A. The enzyme(s) responsible for the biosynthesis of 3,4-dehydrovaline (dVal) have also not been identified yet. Finally, phomM acts as an S-adenosylmethionine-dependent alpha-N-methyltransferase that catalyzes two successive N-methylation reactions, converting N-desmethyl-phomopsin A to phomopsin A and phomopsin A further to an N,N-dimethylated congener called phomopsin E. The polypeptide is Short-chain dehydrogenase/reductase PhomF (Diaporthe leptostromiformis (Lupinosis disease fungus)).